A 236-amino-acid polypeptide reads, in one-letter code: Sugar fermentation stimulation protein homolog (236 aa).

The protein belongs to the SfsA family.

The polypeptide is Sugar fermentation stimulation protein homolog (Pseudomonas fluorescens (strain SBW25)).